The sequence spans 237 residues: Eukaryotic translation initiation factor 3 subunit K (237 aa).

Residues 44 to 219 (CDCNANRALL…EARKAEIRED (176 aa)) enclose the PCI domain.

It belongs to the eIF-3 subunit K family. In terms of assembly, component of the eukaryotic translation initiation factor 3 (eIF-3) complex.

Its subcellular location is the cytoplasm. In terms of biological role, component of the eukaryotic translation initiation factor 3 (eIF-3) complex, which is involved in protein synthesis of a specialized repertoire of mRNAs and, together with other initiation factors, stimulates binding of mRNA and methionyl-tRNAi to the 40S ribosome. The eIF-3 complex specifically targets and initiates translation of a subset of mRNAs involved in cell proliferation. This Neurospora crassa (strain ATCC 24698 / 74-OR23-1A / CBS 708.71 / DSM 1257 / FGSC 987) protein is Eukaryotic translation initiation factor 3 subunit K.